Here is a 471-residue protein sequence, read N- to C-terminus: Phosphatidylserine synthase 2 (471 aa).

The interval Met1–Glu26 is disordered. The Cytoplasmic segment spans residues Met1–Arg40. A phosphoserine mark is found at Ser12, Ser14, and Ser16. A helical membrane pass occupies residues Ala41–Glu61. At Glu62 to Gly74 the chain is on the lumenal side. Residues Ile75–Phe95 traverse the membrane as a helical segment. The Cytoplasmic segment spans residues Ser96–Arg104. Residues Phe105 to Val125 traverse the membrane as a helical segment. Topologically, residues His126–Arg291 are lumenal. Asn159 carries N-linked (GlcNAc...) asparagine glycosylation. Residues Trp292–Leu312 traverse the membrane as a helical segment. Residue Lys313 is a topological domain, cytoplasmic. A helical membrane pass occupies residues Phe314–Asn334. At Val335 to Arg354 the chain is on the lumenal side. The helical transmembrane segment at Lys355–Val375 threads the bilayer. Residues Lys376–Thr381 are Cytoplasmic-facing. A helical membrane pass occupies residues Leu382–Leu402. Over Thr403–Ser471 the chain is Lumenal. A disordered region spans residues Arg423–Ser471.

Belongs to the phosphatidyl serine synthase family.

Its subcellular location is the endoplasmic reticulum membrane. The catalysed reaction is a 1,2-diacyl-sn-glycero-3-phosphoethanolamine + L-serine = a 1,2-diacyl-sn-glycero-3-phospho-L-serine + ethanolamine. It catalyses the reaction 1-hexadecanoyl-2-(9Z-octadecenoyl)-sn-glycero-3-phosphoethanolamine + L-serine = 1-hexadecanoyl-2-(9Z-octadecenoyl)-sn-glycero-3-phospho-L-serine + ethanolamine. The enzyme catalyses 1-hexadecanoyl-2-(4Z,7Z,10Z,13Z,16Z,19Z-docosahexaenoyl)-sn-glycero-3-phosphoethanolamine + L-serine = 1-hexadecanoyl-2-(4Z,7Z,10Z,13Z,16Z,19Z-docosahexaenoyl)-sn-glycero-3-phosphoserine + ethanolamine. It carries out the reaction 1-octadecanoyl-2-(5Z,8Z,11Z,14Z)-eicosatetraenoyl-sn-glycero-3-phosphoethanolamine + L-serine = 1-octadecanoyl-2-(5Z,8Z,11Z,14Z)-eicosatetraenoyl-sn-glycero-3-phosphoserine + ethanolamine. The catalysed reaction is 1-octadecanoyl-2-(4Z,7Z,10Z,13Z,16Z,19Z-docosahexaenoyl)-sn-glycero-3-phosphoethanolamine + L-serine = 1-octadecanoyl-2-(4Z,7Z,10Z,13Z,16Z,19Z-docosahexaenoyl)-sn-glycero-3-phosphoserine + ethanolamine. It catalyses the reaction 1-(1Z-octadecenyl)-2-(4Z,7Z,10Z,13Z,16Z,19Z-docosahexaenoyl)-sn-glycero-3-phosphoethanolamine + L-serine = 1-(1Z-octadecenyl)-2-(4Z,7Z,10Z,13Z,16Z,19Z-docosahexaenoyl)-sn-glycero-3-phospho-L-serine + ethanolamine. The enzyme catalyses 1-octadecanoyl-2-(9Z-octadecenoyl)-sn-glycero-3-phosphoethanolamine + L-serine = 1-octadecanoyl-2-(9Z-octadecenoyl)-sn-glycero-3-phospho-L-serine + ethanolamine. It carries out the reaction 1-(1Z-octadecenyl)-2-(9Z-octadecenoyl)-sn-glycero-3-phosphoethanolamine + L-serine = 1-(1Z-octadecenyl)-2-(9Z-octadecenoyl)-sn-glycero-3-phospho-L-serine + ethanolamine. The catalysed reaction is 1-(1Z-octadecenyl)-2-(5Z,8Z,11Z,14Z- eicosatetraenoyl)-sn-glycero-3-phosphoethanolamine + L-serine = 1-(1Z-octadecenyl)-2-(5Z,8Z,11Z,14Z-eicosatetraenoyl)-sn-glycero-3-phospho-L-serine + ethanolamine. It functions in the pathway phospholipid metabolism; phosphatidylserine biosynthesis. Catalyzes a base-exchange reaction in which the polar head group of phosphatidylethanolamine (PE) or phosphatidylcholine (PC) is replaced by L-serine. Catalyzes the conversion of phosphatatidylethanolamine and does not act on phosphatidylcholine. Can utilize both phosphatidylethanolamine (PE) plasmalogen and diacyl PE as substrate and the latter is six times better utilized, indicating the importance of an ester linkage at the sn-1 position. Although it shows no sn-1 fatty acyl preference, exhibits significant preference towards docosahexaenoic acid (22:6n-3) compared with 18:1 or 20:4 at the sn-2 position. In Rattus norvegicus (Rat), this protein is Phosphatidylserine synthase 2 (Ptdss2).